A 270-amino-acid chain; its full sequence is MVRQRKKRGRPVSGWVIFDKPKGMRSTEAVSQIKWLFHAQKAGHAGTLDPLASGLLPIALGEATKTVPYVMQGTKTYRFQIAWGEERSTDDLEGEITHISSKRPTQEEILALLPQYTGVILQTPPQFSAIKITGNRAYDLAREGKVVEIPPRQVEIETFKLIETPTRERSVFEITCGKGTYVRSLARDMGRDLGCYGHIADLRRTTVAPFCEDDLITWEELKAVALDKIAINENGIPSERNFTKIDELLIETGAALKCLSHYTLSETRAQ.

The active-site Nucleophile is the Asp-49.

This sequence belongs to the pseudouridine synthase TruB family. Type 1 subfamily.

The enzyme catalyses uridine(55) in tRNA = pseudouridine(55) in tRNA. Responsible for synthesis of pseudouridine from uracil-55 in the psi GC loop of transfer RNAs. This chain is tRNA pseudouridine synthase B, found in Bartonella quintana (strain Toulouse) (Rochalimaea quintana).